Consider the following 198-residue polypeptide: tRNA (pseudouridine(54)-N(1))-methyltransferase (198 aa).

S-adenosyl-L-methionine contacts are provided by residues leucine 130, glycine 153, 176–181 (LSPLEL), and cysteine 186.

Belongs to the methyltransferase superfamily. TrmY family. Homodimer.

It localises to the cytoplasm. It catalyses the reaction pseudouridine(54) in tRNA + S-adenosyl-L-methionine = N(1)-methylpseudouridine(54) in tRNA + S-adenosyl-L-homocysteine + H(+). Its function is as follows. Specifically catalyzes the N1-methylation of pseudouridine at position 54 (Psi54) in tRNAs. The protein is tRNA (pseudouridine(54)-N(1))-methyltransferase of Methanococcus maripaludis (strain C6 / ATCC BAA-1332).